The following is a 40-amino-acid chain: Small polypeptide DEVIL 3 (40 aa).

The interval 9–40 (PCNKKLGGYLKEQKGRLYIIRRCVVMLICWHD) is required for DVL/RTFL small polypeptide activity. A helical transmembrane segment spans residues 12–28 (KKLGGYLKEQKGRLYII).

Belongs to the DVL/RTFL small polypeptides family. In terms of tissue distribution, mostly expressed in flowers and stems, and, to a lower extent, in roots and leaves.

The protein localises to the cell membrane. Its function is as follows. Small polypeptide acting as a regulatory molecule which coordinates cellular responses required for differentiation, growth and development, including leaves shape, pedicule elongation, inflorescence organization and fruit maturation, probably by restricting polar cell proliferation in lateral organs and coordinating socket cell recruitment and differentiation at trichome sites. This Arabidopsis thaliana (Mouse-ear cress) protein is Small polypeptide DEVIL 3.